We begin with the raw amino-acid sequence, 538 residues long: Capsular polysaccharide biosynthesis protein RkpI (538 aa).

6 helical membrane-spanning segments follow: residues 16-36 (LHDY…AVIF), 70-90 (VIAL…YAAA), 114-134 (LVFS…IFYA), 139-159 (IVFW…YMYF), 170-190 (LFWV…LFYG), and 212-232 (NTVR…WLGV).

The protein localises to the cell membrane. The protein operates within capsule biogenesis; capsule polysaccharide biosynthesis. In terms of biological role, involved in antigen K (capsular polysaccharide) biosynthesis. This chain is Capsular polysaccharide biosynthesis protein RkpI (rkpI), found in Rhizobium meliloti (strain 1021) (Ensifer meliloti).